We begin with the raw amino-acid sequence, 380 residues long: GDP-mannose:cellobiosyl-diphosphopolyprenol alpha-mannosyltransferase (380 aa).

It belongs to the glycosyltransferase group 1 family. Glycosyltransferase 4 subfamily.

It carries out the reaction beta-D-Glc-(1-&gt;4)-alpha-D-Glc-di-trans,octa-cis-undecaprenyl diphosphate + GDP-alpha-D-mannose = alpha-D-Man-(1-&gt;3)-beta-D-Glc-(1-&gt;4)-alpha-D-Glc-1-di-trans,octa-cis-undecaprenyl diphosphate + GDP + H(+). Functionally, involved in the biosynthesis of the exopolysaccharide xanthan, a polymer that is comprised of repeating pentasaccharide units with the structure of a beta-(1,4)-linked D-glucose backbone with trisaccharide side chains composed of mannose-beta-(1,4)-glucuronic acid-beta-(1,2)-mannose attached to alternate glucose residues in the backbone by alpha-(1,3) linkages. Xanthan is involved in pathogenicity but has also been used in a variety of applications as a specialty polymer for commercial applications, including food additives, where they act as viscosifying, stabilizing, emulsifying, or gelling agents. The polypeptide is GDP-mannose:cellobiosyl-diphosphopolyprenol alpha-mannosyltransferase (gumH) (Xanthomonas campestris).